Consider the following 652-residue polypeptide: Probable serine/threonine-protein kinase mkcD (652 aa).

Disordered stretches follow at residues Met-1–Lys-47, Asn-163–Val-198, and Gln-257–Pro-289. Residues Asn-182–Asp-191 show a composition bias toward gly residues. A coiled-coil region spans residues Lys-231–Glu-275. Residues Gln-257 to Gln-271 are compositionally biased toward low complexity. Residues Ser-279 to Pro-289 are compositionally biased toward polar residues. The 258-residue stretch at Phe-369 to Leu-626 folds into the Protein kinase domain. ATP-binding positions include Glu-375 to Val-383 and Lys-403. Asp-494 (proton acceptor) is an active-site residue.

It belongs to the protein kinase superfamily. STE Ser/Thr protein kinase family. STE20 subfamily. The cofactor is Mg(2+).

The catalysed reaction is L-seryl-[protein] + ATP = O-phospho-L-seryl-[protein] + ADP + H(+). It carries out the reaction L-threonyl-[protein] + ATP = O-phospho-L-threonyl-[protein] + ADP + H(+). In Dictyostelium discoideum (Social amoeba), this protein is Probable serine/threonine-protein kinase mkcD.